The primary structure comprises 92 residues: Small ribosomal subunit protein uS19 (92 aa).

This sequence belongs to the universal ribosomal protein uS19 family.

Functionally, protein S19 forms a complex with S13 that binds strongly to the 16S ribosomal RNA. In Paramagnetospirillum magneticum (strain ATCC 700264 / AMB-1) (Magnetospirillum magneticum), this protein is Small ribosomal subunit protein uS19.